The primary structure comprises 292 residues: Protoheme IX farnesyltransferase (292 aa).

8 helical membrane-spanning segments follow: residues 15 to 35, 49 to 69, 104 to 124, 147 to 167, 171 to 191, 218 to 238, 242 to 262, and 271 to 291; these read YLVL…LGGM, FWTL…NMVI, VFSL…LVAL, IGGI…SGSV, AIAL…VLAL, TLLY…TGLV, YFVV…KFFF, and LFFF…VDMV.

The protein belongs to the UbiA prenyltransferase family. Protoheme IX farnesyltransferase subfamily.

Its subcellular location is the cell inner membrane. It carries out the reaction heme b + (2E,6E)-farnesyl diphosphate + H2O = Fe(II)-heme o + diphosphate. Its pathway is porphyrin-containing compound metabolism; heme O biosynthesis; heme O from protoheme: step 1/1. In terms of biological role, converts heme B (protoheme IX) to heme O by substitution of the vinyl group on carbon 2 of heme B porphyrin ring with a hydroxyethyl farnesyl side group. This chain is Protoheme IX farnesyltransferase, found in Aquifex aeolicus (strain VF5).